The primary structure comprises 304 residues: Phytol kinase 1, chloroplastic (304 aa).

A chloroplast-targeting transit peptide spans 1 to 59 (MAATLPLSPINHQLCRFGNNSLTTHRFCSPGFLISSPCFIGLTGMGSATQLRARRSLIS). The next 6 helical transmembrane spans lie at 71-91 (VGAT…FESL), 105-125 (LVHI…SGST), 129-149 (YFAA…GLSI), 167-187 (ELLK…VFFW), 191-211 (PIGM…DIMG), and 227-247 (WAGS…LLYY).

This sequence belongs to the polyprenol kinase family.

Its subcellular location is the plastid. It localises to the chloroplast membrane. It catalyses the reaction phytol + CTP = phytyl phosphate + CDP + H(+). It participates in cofactor biosynthesis; tocopherol biosynthesis. Functionally, kinase involved in the activation and reutilization of phytol from chlorophyll degradation in plant metabolism, including tocopherol biosynthesis. Catalyzes the conversion of phytol to phytol monophosphate (PMP) in the presence of CTP or UTP. No activity with ATP or GTP as phosphoryl donor. The protein is Phytol kinase 1, chloroplastic of Arabidopsis thaliana (Mouse-ear cress).